The following is a 322-amino-acid chain: Olfactory receptor 5P2 (322 aa).

The Extracellular segment spans residues 1 to 28 (MNSLKDGNHTALTGFILLGLTDDPILRV). Asparagine 8 carries an N-linked (GlcNAc...) asparagine glycan. A helical membrane pass occupies residues 29 to 42 (ILFMIILSGNLSII). Residues 43–50 (ILIRISSQ) lie on the Cytoplasmic side of the membrane. The helical transmembrane segment at 51-71 (LHHPMYFFLSHLAFADMAYSS) threads the bilayer. At 72–95 (SVTPNMLVNFLVERNTVSYLGCAI) the chain is on the extracellular side. An intrachain disulfide couples cysteine 93 to cysteine 185. A helical transmembrane segment spans residues 96 to 116 (QLGSAAFFATVECVLLAAMAY). The Cytoplasmic portion of the chain corresponds to 117–135 (DRFVAICSPLLYSTKMSTQ). The chain crosses the membrane as a helical span at residues 136–156 (VSVQLLLVVYIAGFLIAVSYT). Residues 157–192 (TSFYFLLFCGPNQVNHFFCDFAPLLELSCSDISVST) lie on the Extracellular side of the membrane. A helical membrane pass occupies residues 193 to 213 (VVLSFSSGSIIVVTVCVIAVC). Residues 214–233 (YIYILITILKMRSTEGHHKA) are Cytoplasmic-facing. Residues 234 to 254 (FSTCTSHLTVVTLFYGTITFI) traverse the membrane as a helical segment. Topologically, residues 255–267 (YVMPNFSYSTDQN) are extracellular. A glycan (N-linked (GlcNAc...) asparagine) is linked at asparagine 259. Residues 268-288 (KVVSVLYTVVIPMLNPLIYSL) form a helical membrane-spanning segment. Residues 289–322 (RNKEIKGALKRELVRKILSHDACYFSRTSNNDIT) lie on the Cytoplasmic side of the membrane.

This sequence belongs to the G-protein coupled receptor 1 family. As to expression, expressed in the tongue.

The protein resides in the cell membrane. Functionally, odorant receptor (Potential). May be involved in taste perception. The protein is Olfactory receptor 5P2 (OR5P2) of Homo sapiens (Human).